Here is a 784-residue protein sequence, read N- to C-terminus: Lon protease (784 aa).

One can recognise a Lon N-terminal domain in the interval 6-207 (LPLMALRDMV…TVITTLTSNI (202 aa)). An ATP-binding site is contributed by 356-363 (GPPGVGKT). Residues 592-773 (EDQIGSTTGL…DQVLKHALVE (182 aa)) enclose the Lon proteolytic domain. Catalysis depends on residues S679 and K722.

This sequence belongs to the peptidase S16 family. In terms of assembly, homohexamer. Organized in a ring with a central cavity.

It localises to the cytoplasm. The enzyme catalyses Hydrolysis of proteins in presence of ATP.. Functionally, ATP-dependent serine protease that mediates the selective degradation of mutant and abnormal proteins as well as certain short-lived regulatory proteins. Required for cellular homeostasis and for survival from DNA damage and developmental changes induced by stress. Degrades polypeptides processively to yield small peptide fragments that are 5 to 10 amino acids long. Binds to DNA in a double-stranded, site-specific manner. The protein is Lon protease of Rickettsia typhi (strain ATCC VR-144 / Wilmington).